The sequence spans 283 residues: MLRIAVQAKGRLFEETMALLEESDIKLSTTKRTLLVQSSNFPVEVLFLRDDDIPQSVATGVADLGIVGENEFVERQEDAEIIKRLGFSKCRLSLAMPKDIEYPGLSWFNGKKIATSYPGILDAFMKSNGVKAEVHVITGSVEVAPGIGLADAIFDIVSSGSTLVSNRLKEVEVVMRSEALLIGNKNMSKEKKEILDELLFRMDAVKTAEDKKYVLMNAPKDKLEDIIAVLPGMKSPTVMPLAQDGWCSVHTVLDEKRFWEIIGKLKALGAEGILVLPIEKMII.

It belongs to the ATP phosphoribosyltransferase family. Long subfamily. It depends on Mg(2+) as a cofactor.

It localises to the cytoplasm. The enzyme catalyses 1-(5-phospho-beta-D-ribosyl)-ATP + diphosphate = 5-phospho-alpha-D-ribose 1-diphosphate + ATP. The protein operates within amino-acid biosynthesis; L-histidine biosynthesis; L-histidine from 5-phospho-alpha-D-ribose 1-diphosphate: step 1/9. With respect to regulation, feedback inhibited by histidine. Catalyzes the condensation of ATP and 5-phosphoribose 1-diphosphate to form N'-(5'-phosphoribosyl)-ATP (PR-ATP). Has a crucial role in the pathway because the rate of histidine biosynthesis seems to be controlled primarily by regulation of HisG enzymatic activity. The chain is ATP phosphoribosyltransferase from Bacteroides fragilis (strain ATCC 25285 / DSM 2151 / CCUG 4856 / JCM 11019 / LMG 10263 / NCTC 9343 / Onslow / VPI 2553 / EN-2).